A 287-amino-acid polypeptide reads, in one-letter code: Ribosomal RNA small subunit methyltransferase A (287 aa).

Asn28, Leu30, Gly55, Glu77, Asp103, and Asn123 together coordinate S-adenosyl-L-methionine.

The protein belongs to the class I-like SAM-binding methyltransferase superfamily. rRNA adenine N(6)-methyltransferase family. RsmA subfamily.

The protein localises to the cytoplasm. It carries out the reaction adenosine(1518)/adenosine(1519) in 16S rRNA + 4 S-adenosyl-L-methionine = N(6)-dimethyladenosine(1518)/N(6)-dimethyladenosine(1519) in 16S rRNA + 4 S-adenosyl-L-homocysteine + 4 H(+). Specifically dimethylates two adjacent adenosines (A1518 and A1519) in the loop of a conserved hairpin near the 3'-end of 16S rRNA in the 30S particle. May play a critical role in biogenesis of 30S subunits. In Rhodopseudomonas palustris (strain TIE-1), this protein is Ribosomal RNA small subunit methyltransferase A.